Here is an 85-residue protein sequence, read N- to C-terminus: Small ribosomal subunit protein uS17 (85 aa).

The protein belongs to the universal ribosomal protein uS17 family. In terms of assembly, part of the 30S ribosomal subunit.

One of the primary rRNA binding proteins, it binds specifically to the 5'-end of 16S ribosomal RNA. The protein is Small ribosomal subunit protein uS17 of Trichlorobacter lovleyi (strain ATCC BAA-1151 / DSM 17278 / SZ) (Geobacter lovleyi).